The sequence spans 687 residues: SLCO1B3-SLCO1B7 readthrough transcript protein (687 aa).

Over 1 to 29 the chain is Cytoplasmic; that stretch reads MDQHQHLNKTAESASSEKKKTRRCNGFKM. A helical membrane pass occupies residues 30–50; that stretch reads FLAALSFSYIAKALGGIIMKI. Residues 51–63 are Extracellular-facing; sequence SITQIERRFDISS. A helical transmembrane segment spans residues 64 to 84; sequence SLAGLIDGSFEIGNLLVIVFV. Residues 85–96 are Cytoplasmic-facing; sequence SYFGSKLHRPKL. Residues 97–117 form a helical membrane-spanning segment; that stretch reads IGIGCLLMGTGSILTSLPHFF. The Extracellular portion of the chain corresponds to 118-170; the sequence is MGYYRYSKETNIDPSENSTSNLPNCLINQMLSLNRTPSEIIERGCVKESGSHM. Residues asparagine 134 and asparagine 151 are each glycosylated (N-linked (GlcNAc...) asparagine). Residues 171-191 traverse the membrane as a helical segment; the sequence is WIYVFMGNMLRGIGETPIVPL. Topologically, residues 192-206 are cytoplasmic; the sequence is GISYIDDFAKEGHSS. Residues 207 to 227 traverse the membrane as a helical segment; it reads LYLGTVNVMGMTGLVFAFMLG. The Extracellular segment spans residues 228 to 258; it reads SLFAKMYVDIGYVDLSTIRITPKDSRWVGAW. A helical transmembrane segment spans residues 259 to 279; that stretch reads WLGFLVSGIVSIISSIPFFFL. Residues 280–339 lie on the Cytoplasmic side of the membrane; sequence PLNPNKPQKERKVSLFLHVLKTNDKRNQIANLTNRRKYITKNVTGFFQSLKSILTNPLYV. A helical membrane pass occupies residues 340 to 360; sequence IFVIFTLLHMSSYIASLTYII. At 361–376 the chain is on the extracellular side; it reads KMVEQQYGWSASKTNF. The chain crosses the membrane as a helical span at residues 377–397; sequence LLGVLALPAVAIGMFSGGYII. The Cytoplasmic segment spans residues 398 to 409; it reads KKFKLSLVGLAK. Residues 410–430 form a helical membrane-spanning segment; it reads LAFCSATVHLLSQVLYFFLIC. Over 431–539 the chain is Extracellular; that stretch reads ESKSVAGLTL…CTRKSYVYFV (109 aa). Residues 453–508 enclose the Kazal-like domain; it reads DVPLSYCNSECNCDESQWEPVCGNNGITYLSPCLAGCKSSSGNKEPIVFYNCSCVE. Disulfide bonds link cysteine 459-cysteine 489, cysteine 465-cysteine 485, and cysteine 474-cysteine 506. 2 N-linked (GlcNAc...) asparagine glycosylation sites follow: asparagine 503 and asparagine 516. The chain crosses the membrane as a helical span at residues 540-560; that stretch reads IQVLDAFLCAVGLTSYSVLVI. Residues 561–568 lie on the Cytoplasmic side of the membrane; sequence RIVQPELK. Residues 569–589 traverse the membrane as a helical segment; the sequence is ALAIGFHSMIMRSLGGILVPI. The Extracellular portion of the chain corresponds to 590–624; sequence YFGALIDTTCMKWSTNSCGARGACRIYNSTYLGRA. An N-linked (GlcNAc...) asparagine glycan is attached at asparagine 617. Residues 625–645 traverse the membrane as a helical segment; that stretch reads FFGLKVALIFPVLVLLTVFIF. The Cytoplasmic portion of the chain corresponds to 646–687; sequence VVRKKSHGKDTKVLENERQVMDEANLEFLNDSEHFVPSAEEQ.

This sequence belongs to the organo anion transporter (TC 2.A.60) family. In terms of tissue distribution, expressed in the perivenular areas (centrilobular) of the liver (at protein level).

The protein localises to the smooth endoplasmic reticulum membrane. It localises to the cell membrane. It is found in the endoplasmic reticulum membrane. The enzyme catalyses 17beta-estradiol 17-O-(beta-D-glucuronate)(out) = 17beta-estradiol 17-O-(beta-D-glucuronate)(in). The catalysed reaction is dehydroepiandrosterone 3-sulfate(out) = dehydroepiandrosterone 3-sulfate(in). It catalyses the reaction taurocholate(out) = taurocholate(in). It carries out the reaction lithocholate(out) = lithocholate(in). Transport activity is induced by farnesoid X receptor (FXR) agonists such as chenodeoxycholate. Mediates the Na(+)-independent uptake of organic anions. Transports the conjugated steroids 17-beta-glucuronosyl estradiol (17beta-estradiol 17-O-(beta-D-glucuronate) or E2G) and dehydroepiandrosterone 3-sulfate (DHEAS) at the smooth endoplasmic reticulum membrane (SER), granting access to metabolizing enzymes. Contributes to the metabolism of bile acids such as taurocholate (cholyltaurine) and lithocholate, by functioning as a doorway between SER and cytosol, thereby decreasing their circulating levels and protecting the organism from their detergent properties. Regulates access or exit of drugs to the SER lumen. This chain is SLCO1B3-SLCO1B7 readthrough transcript protein, found in Homo sapiens (Human).